Here is a 329-residue protein sequence, read N- to C-terminus: Meiotic drive suppressor wtf21 (329 aa).

The segment at 1-68 (MKNNYTSLKS…RENNPSRSTD (68 aa)) is disordered. The segment covering 19–30 (KTDHEIDLEKGP) has biased composition (basic and acidic residues). 5 helical membrane passes run 73–95 (FLIKLLISFTPIYVLNVLAICYL), 110–132 (WTLFGFWCLVCTLALIFLTYFYE), 165–182 (IIIWILWLIICCILFVYI), 192–214 (ALICSTCTISAVLLLIVSSVCIP), and 290–312 (GIAFILGGIGNAMMGLANAIRGA).

It belongs to the WTF family. As to quaternary structure, homomer. Interacts with other proteins that exhibit high sequence similarity.

It is found in the spore membrane. The protein resides in the vacuole membrane. Acts as a suppressor component of the dual wtf meiotic drive system, and can suppress but not confer meiotic drive by compatible poisons. Wtf meiotic drive systems promote unequal transmission of alleles from the parental zygote to progeny spores by encoding a poison and an antidote from the same locus; the poison is trans-acting and forms toxic aggregates in all spores within an ascus, wherease the antidote is spore-specific and targets aggregates for degradation by the vacuole. Meiotic drive by wtf systems therefore lead to poisoning of all progeny that do not inherit the dual poison/antidote allele, or express a compatible antidote. The polypeptide is Meiotic drive suppressor wtf21 (Schizosaccharomyces pombe (strain 972 / ATCC 24843) (Fission yeast)).